Here is a 71-residue protein sequence, read N- to C-terminus: Palustrin-Ca (71 aa).

The first 22 residues, 1-22 (MFTLKKSLLLLFFLGTISLSLC), serve as a signal peptide directing secretion. The propeptide occupies 23 to 40 (EQERDADGDEGEVEEVKR). Residues Cys63 and Cys69 are joined by a disulfide bond.

It belongs to the frog skin active peptide (FSAP) family. Brevinin subfamily. Expressed by the skin glands.

The protein resides in the secreted. The protein localises to the target cell membrane. In terms of biological role, antibacterial peptide with amphipathic alpha-helical structure that exhibits potent broad-spectrum activity against Gram-positive and -negative bacteria. It is active against Listeria ATCC 54004 (MIC=30 ug/ml), S.aureus ATCC 25923 (MIC=7.8 ug/ml), S.suis 2 CVCC 606 (MIC=31.25 ug/ml), B.subtilis ADB403 (30 ug/ml), K.pneumoniae ATCC 700603 (MIC=60 ug/ml) and P.aeruginosa ATCC 227853 (MIC=30 ug/ml). Does not show activity against Salmonella ATCC 20020 and the fungus Candida albicans. Is also cytotoxic to HeLa cells at high concentrations. In addition, shows a strong antitumor activity but only a little hemolytic activity. Despite the presence of a Gly residue at position 10, this alpha-helical peptide remains relatively rigid, not exhibiting any significant flexibility during the molecular dynamics simulation. The peptide shows a preference for a position parallel to the target membrane that suggests it exerts its antimicrobial activity through a non-pore-forming mechanism of action, such as the carpet model or the interfacial activity model. This Aquarana catesbeiana (American bullfrog) protein is Palustrin-Ca.